A 411-amino-acid polypeptide reads, in one-letter code: Putative nickel insertion protein (411 aa).

It belongs to the LarC family.

The sequence is that of Putative nickel insertion protein from Acaryochloris marina (strain MBIC 11017).